Reading from the N-terminus, the 120-residue chain is uncharacterized protein (120 aa).

The 114-residue stretch at 7 to 120 folds into the HIT domain; that stretch reads VFAKIITKNL…KLIGLINNND (114 aa). The Histidine triad motif signature appears at 101 to 105; it reads HFHFH.

This is an uncharacterized protein from Rickettsia prowazekii (strain Madrid E).